Reading from the N-terminus, the 116-residue chain is uncharacterized protein (116 aa).

This is an uncharacterized protein from Acheta domesticus (House cricket).